We begin with the raw amino-acid sequence, 100 residues long: Urease subunit gamma (100 aa).

Belongs to the urease gamma subunit family. As to quaternary structure, heterotrimer of UreA (gamma), UreB (beta) and UreC (alpha) subunits. Three heterotrimers associate to form the active enzyme.

The protein localises to the cytoplasm. It catalyses the reaction urea + 2 H2O + H(+) = hydrogencarbonate + 2 NH4(+). It functions in the pathway nitrogen metabolism; urea degradation; CO(2) and NH(3) from urea (urease route): step 1/1. This Chromohalobacter salexigens (strain ATCC BAA-138 / DSM 3043 / CIP 106854 / NCIMB 13768 / 1H11) protein is Urease subunit gamma.